We begin with the raw amino-acid sequence, 323 residues long: tRNA dimethylallyltransferase (323 aa).

ATP is bound at residue 12–19 (GPTAAGKT). Substrate is bound at residue 14–19 (TAAGKT). Interaction with substrate tRNA regions lie at residues 37–40 (DSAL) and 161–165 (QRLIR).

This sequence belongs to the IPP transferase family. As to quaternary structure, monomer. The cofactor is Mg(2+).

The catalysed reaction is adenosine(37) in tRNA + dimethylallyl diphosphate = N(6)-dimethylallyladenosine(37) in tRNA + diphosphate. Its function is as follows. Catalyzes the transfer of a dimethylallyl group onto the adenine at position 37 in tRNAs that read codons beginning with uridine, leading to the formation of N6-(dimethylallyl)adenosine (i(6)A). This Pseudomonas putida (strain ATCC 47054 / DSM 6125 / CFBP 8728 / NCIMB 11950 / KT2440) protein is tRNA dimethylallyltransferase.